A 656-amino-acid polypeptide reads, in one-letter code: Leucine-rich repeat-containing protein 43 (656 aa).

Residues 1–13 are compositionally biased toward acidic residues; the sequence is MEASYESESESES. Residues 1–25 form a disordered region; the sequence is MEASYESESESESEAGPGTQRPGTG. LRR repeat units follow at residues 150–170, 172–193, 196–215, and 223–244; these read KLEELVLSANRIKEVDATNLP, TLKVLELYGNEISSMECLCAHP, GLQHLGLGHNKLLGPLESLY, and NLVSLDLGFNDLTDLQSMVTSL. In terms of domain architecture, LRRCT spans 258 to 296; it reads NPLALVPYYRGLTIDSLAQLCVLDDITVSPNEKHLFRGL. The tract at residues 512–554 is disordered; it reads LSAKKGKGEKDKKGKEKDRTGKGEKEPAKEWKVLKKKKEPPKE. Residues 517 to 544 are compositionally biased toward basic and acidic residues; it reads GKGEKDKKGKEKDRTGKGEKEPAKEWKV.

The chain is Leucine-rich repeat-containing protein 43 (LRRC43) from Homo sapiens (Human).